The sequence spans 410 residues: F-box protein At3g61340 (410 aa).

The region spanning 17–66 (EEKSERIPFDLVIEILLRLPVKSIARFRYVSKLWQSTLRGQHFTESYLTI) is the F-box domain.

The chain is F-box protein At3g61340 from Arabidopsis thaliana (Mouse-ear cress).